The chain runs to 771 residues: Putative 8-amino-7-oxononanoate synthase 2 (771 aa).

Residues 1-418 form a unknown region; sequence MPTGLGYDFL…TVKAAELGEI (418 aa). A substrate-binding site is contributed by Arg407. Residues 419–771 are KAPA synthase; the sequence is VLLGTNSYLG…EDLTPQGAAL (353 aa). 485-486 provides a ligand contact to pyridoxal 5'-phosphate; sequence GY. His510 is a binding site for substrate. Residues Ser556 and 581–584 each bind pyridoxal 5'-phosphate; that span reads DESH. An N6-(pyridoxal phosphate)lysine modification is found at Lys615.

In the C-terminal section; belongs to the class-II pyridoxal-phosphate-dependent aminotransferase family. BioF subfamily. The cofactor is pyridoxal 5'-phosphate.

The catalysed reaction is 6-carboxyhexanoyl-[ACP] + L-alanine + H(+) = (8S)-8-amino-7-oxononanoate + holo-[ACP] + CO2. Its function is as follows. Catalyzes the decarboxylative condensation of pimeloyl-[acyl-carrier protein] and L-alanine to produce 8-amino-7-oxononanoate (AON), [acyl-carrier protein], and carbon dioxide. This Mycobacterium tuberculosis (strain CDC 1551 / Oshkosh) protein is Putative 8-amino-7-oxononanoate synthase 2 (bioF2).